The sequence spans 476 residues: POC1 centriolar protein homolog B (476 aa).

WD repeat units lie at residues Gly-16–Arg-55, Gly-58–Glu-97, Ala-100–Ser-139, Arg-142–Asn-181, Ser-183–His-223, Val-226–Thr-265, and Gly-268–Lys-307. The stretch at Ala-429–Leu-468 forms a coiled coil.

It belongs to the WD repeat POC1 family. Interacts with POC1A. Interacts with FAM161A. Interacts with CEP44; the interaction is direct and recruits POC1B to centriolar microtubules. Forms a microtubule-associated complex with POC5, CETN2 and FAM161A. Interacts with CCDC15. In terms of processing, phosphorylated in mitotic cells that may be mediated by CDK1. Expressed in the retina.

The protein resides in the cytoplasm. It is found in the cytoskeleton. It localises to the microtubule organizing center. Its subcellular location is the centrosome. The protein localises to the centriole. The protein resides in the cilium basal body. It is found in the spindle pole. Its function is as follows. Plays an important role in centriole assembly and/or stability and ciliogenesis. Involved in early steps of centriole duplication, as well as in the later steps of centriole length control. Acts in concert with POC1A to ensure centriole integrity and proper mitotic spindle formation. Required for primary cilia formation, ciliary length and also cell proliferation. Required for retinal integrity. Acts as a positive regulator of centriole elongation. This chain is POC1 centriolar protein homolog B (Poc1b), found in Mus musculus (Mouse).